A 181-amino-acid polypeptide reads, in one-letter code: Thymidine kinase (181 aa).

13 to 20 (GPMFSGKS) provides a ligand contact to ATP. E85 serves as the catalytic Proton acceptor. Residue F115 coordinates substrate. 2 residues coordinate Zn(2+): C140 and C143. Substrate is bound at residue 159–163 (IEIIG). Zn(2+) contacts are provided by C172 and C175.

This sequence belongs to the thymidine kinase family.

It carries out the reaction thymidine + ATP = dTMP + ADP + H(+). The protein is Thymidine kinase (TK) of Yaba monkey tumor virus (strain VR587) (YMTV).